Here is a 631-residue protein sequence, read N- to C-terminus: Coiled-coil domain-containing protein 93 (631 aa).

2 disordered regions span residues 1 to 23 (MGLP…DEEQ) and 214 to 243 (QSKM…HEED). A sufficient for interaction with CCDC22 region spans residues 1–430 (MGLPRGPEGQ…LKAERAPRGD (430 aa)). Over residues 215-225 (SKMEKAEDKKT) the composition is skewed to basic and acidic residues. Residues S298, S301, and S305 each carry the phosphoserine modification. Residues 309–631 (LGTSQLHRRK…LLSKVKAKAS (323 aa)) adopt a coiled-coil conformation. Positions 421–433 (LKAERAPRGDEKT) are enriched in basic and acidic residues. The disordered stretch occupies residues 421–447 (LKAERAPRGDEKTLSSGEPPGTLTSAM). The segment at 448–631 (THDEDLDRRY…LLSKVKAKAS (184 aa)) is sufficient for interaction with WASHC2C.

The protein belongs to the CCDC93 family. In terms of assembly, component of the commander complex consisting of the CCC subcomplex and the retriever subcomplex. Component of the CCC (COMMD/CCDC22/CCDC93) subcomplex consisting of COMMD1, COMMD2, COMMD3, COMMD4, COMMD5, COMMD6, COMMD7, COMMD8, COMMD9, COMMD10, CCDC22 and CCDC93. Forms a coiled-coil heterodimer with CCDC22; this heterodimer interacts with the guanine nucleotide exchange factor DENND10; the interaction is direct. Interacts with WASHC1. Interacts directly with WASHC2C. Interacts with SNX17 and SNX31.

It localises to the early endosome. Its function is as follows. Component of the commander complex that is essential for endosomal recycling of transmembrane cargos; the commander complex is composed of composed of the CCC subcomplex and the retriever subcomplex. Component of the CCC complex, which is involved in the regulation of endosomal recycling of surface proteins, including integrins, signaling receptor and channels. The CCC complex associates with SNX17, retriever and WASH complexes to prevent lysosomal degradation and promote cell surface recycling of numerous cargos such as integrins ITGA5:ITGB1. Involved in copper-dependent ATP7A trafficking between the trans-Golgi network and vesicles in the cell periphery; the function is proposed to depend on its association within the CCC complex and cooperation with the WASH complex on early endosomes and is dependent on its interaction with WASHC2C. Functionally, (Microbial infection) The CCC complex, in collaboration with the heterotrimeric retriever complex, mediates the exit of human papillomavirus to the cell surface. The chain is Coiled-coil domain-containing protein 93 (CCDC93) from Homo sapiens (Human).